Consider the following 157-residue polypeptide: Phosphopantetheine adenylyltransferase (157 aa).

Serine 9 is a substrate binding site. ATP contacts are provided by residues 9–10 and histidine 17; that span reads SF. Residues lysine 41, valine 73, and lysine 87 each coordinate substrate. ATP-binding positions include 88–90, glutamate 98, and 122–128; these read GLR and YSFVSSS.

The protein belongs to the bacterial CoaD family. Homohexamer. The cofactor is Mg(2+).

The protein localises to the cytoplasm. The catalysed reaction is (R)-4'-phosphopantetheine + ATP + H(+) = 3'-dephospho-CoA + diphosphate. It functions in the pathway cofactor biosynthesis; coenzyme A biosynthesis; CoA from (R)-pantothenate: step 4/5. Its function is as follows. Reversibly transfers an adenylyl group from ATP to 4'-phosphopantetheine, yielding dephospho-CoA (dPCoA) and pyrophosphate. This Mycobacterium marinum (strain ATCC BAA-535 / M) protein is Phosphopantetheine adenylyltransferase.